The following is a 386-amino-acid chain: DNA-directed RNA polymerase subunit Rpo1C (386 aa).

It belongs to the RNA polymerase beta' chain family. Part of the RNA polymerase complex.

The protein resides in the cytoplasm. The catalysed reaction is RNA(n) + a ribonucleoside 5'-triphosphate = RNA(n+1) + diphosphate. Its function is as follows. DNA-dependent RNA polymerase (RNAP) catalyzes the transcription of DNA into RNA using the four ribonucleoside triphosphates as substrates. Forms part of the jaw domain. This is DNA-directed RNA polymerase subunit Rpo1C from Methanococcus maripaludis (strain C6 / ATCC BAA-1332).